The primary structure comprises 189 residues: Glycerol-3-phosphate acyltransferase (189 aa).

Transmembrane regions (helical) follow at residues 1-21 (MVWL…AILL), 79-99 (QQAW…YFNF), 113-133 (LGLY…VFAF), and 151-171 (LLAW…GVIV).

It belongs to the PlsY family. In terms of assembly, probably interacts with PlsX.

The protein localises to the cell inner membrane. The enzyme catalyses an acyl phosphate + sn-glycerol 3-phosphate = a 1-acyl-sn-glycero-3-phosphate + phosphate. The protein operates within lipid metabolism; phospholipid metabolism. Catalyzes the transfer of an acyl group from acyl-phosphate (acyl-PO(4)) to glycerol-3-phosphate (G3P) to form lysophosphatidic acid (LPA). This enzyme utilizes acyl-phosphate as fatty acyl donor, but not acyl-CoA or acyl-ACP. This is Glycerol-3-phosphate acyltransferase from Azotobacter vinelandii (strain DJ / ATCC BAA-1303).